The sequence spans 152 residues: D-aminoacyl-tRNA deacylase (152 aa).

Positions 142-143 (GP) match the Gly-cisPro motif, important for rejection of L-amino acids motif.

The protein belongs to the DTD family. Homodimer.

The protein resides in the cytoplasm. It catalyses the reaction glycyl-tRNA(Ala) + H2O = tRNA(Ala) + glycine + H(+). The enzyme catalyses a D-aminoacyl-tRNA + H2O = a tRNA + a D-alpha-amino acid + H(+). Its function is as follows. An aminoacyl-tRNA editing enzyme that deacylates mischarged D-aminoacyl-tRNAs. Also deacylates mischarged glycyl-tRNA(Ala), protecting cells against glycine mischarging by AlaRS. Acts via tRNA-based rather than protein-based catalysis; rejects L-amino acids rather than detecting D-amino acids in the active site. By recycling D-aminoacyl-tRNA to D-amino acids and free tRNA molecules, this enzyme counteracts the toxicity associated with the formation of D-aminoacyl-tRNA entities in vivo and helps enforce protein L-homochirality. The sequence is that of D-aminoacyl-tRNA deacylase from Burkholderia cenocepacia (strain ATCC BAA-245 / DSM 16553 / LMG 16656 / NCTC 13227 / J2315 / CF5610) (Burkholderia cepacia (strain J2315)).